The following is a 441-amino-acid chain: Protein dcd1A (441 aa).

Residues 1-23 form the signal peptide; it reads MKIFNKLIFLIIQCILIISVTNA. N-linked (GlcNAc...) asparagine glycans are attached at residues Asn-45, Asn-261, Asn-308, and Asn-419.

The protein localises to the secreted. The chain is Protein dcd1A (dcd1A) from Dictyostelium discoideum (Social amoeba).